A 466-amino-acid chain; its full sequence is Asparagine--tRNA ligase (466 aa).

Belongs to the class-II aminoacyl-tRNA synthetase family. In terms of assembly, homodimer.

It localises to the cytoplasm. The enzyme catalyses tRNA(Asn) + L-asparagine + ATP = L-asparaginyl-tRNA(Asn) + AMP + diphosphate + H(+). This is Asparagine--tRNA ligase from Xylella fastidiosa (strain Temecula1 / ATCC 700964).